Here is a 1272-residue protein sequence, read N- to C-terminus: Protein diaphanous homolog 1 (1272 aa).

M1 carries the post-translational modification N-acetylmethionine. Residues 1-12 (MEPPGGSLGPGR) are compositionally biased toward gly residues. Residues 1 to 84 (MEPPGGSLGP…YGDDPTAQSL (84 aa)) form a disordered region. 3 positions are modified to phosphoserine: S7, S22, and S36. Residues 44–65 (LMADELERFTSMRIKKEKEKPN) are compositionally biased toward basic and acidic residues. Residues 67-84 (AHRNSSASYGDDPTAQSL) are compositionally biased toward polar residues. Positions 84-449 (LQDVSDEQVL…QIVLHKNGAD (366 aa)) constitute a GBD/FH3 domain. Residues 468–572 (MIDKTKVEKS…ASLSAAAITV (105 aa)) are a coiled coil. The interval 573–755 (PPSVPSRAPV…GMPPPPPFGF (183 aa)) is disordered. Composition is skewed to pro residues over residues 574 to 589 (PSVPSRAPVPPAPPLP), 596 to 622 (IPPPPAPGDSTTPPPPPPPPPPPPPLP), and 640 to 658 (SPPPPLSGDATIPPPPPLP). The FH1 domain occupies 583–764 (PPAPPLPGDS…FGVPAAPVLP (182 aa)). A compositionally biased stretch (low complexity) spans 659–674 (EGVGIPSPSSLPGGTA). Residues 675-753 (IPPPPPLPGS…GMGMPPPPPF (79 aa)) are compositionally biased toward pro residues. A Phosphothreonine modification is found at T768. An FH2 domain is found at 769–1171 (PKKLYKPEVQ…MRRAKLAKEK (403 aa)). Residues 1039 to 1196 (DELAHVEKAS…IDMNAEGDET (158 aa)) adopt a coiled-coil conformation. N6-acetyllysine occurs at positions 1057 and 1103. Y1121 is modified (phosphotyrosine). Residues 1194–1222 (DETGVMDSLLEALQSGAAFRRKRGPRQAN) form the DAD domain. 2 positions are modified to phosphoserine: S1251 and S1254.

This sequence belongs to the formin homology family. Diaphanous subfamily. In terms of assembly, homodimer. Interacts with the GTP-bound form of RHOA. Interacts with RHOC, PFY1, MAPRE1 and BAIAP2. Interacts with APC; acts as a scaffold protein for MAPRE1 and APC to stabilize microtubules and promote cell migration. Interacts with SCAI. Interacts with DCAF7, via FH2 domain. Interacts with NCDN. Interacts with OSBPL10, OSBPL2, VIM, TUBB and DYN1. In terms of processing, phosphorylation at Thr-768 is stimulated by cAMP and regulates stability, complex formation and mitochondrial movement. In terms of tissue distribution, expressed in brain, heart, placenta, lung, kidney, pancreas, liver, skeletal muscle and cochlea. Expressed in platelets.

The protein resides in the cell membrane. Its subcellular location is the cell projection. The protein localises to the ruffle membrane. It localises to the cytoplasm. It is found in the cytoskeleton. The protein resides in the microtubule organizing center. Its subcellular location is the centrosome. The protein localises to the spindle. It localises to the nucleus. In terms of biological role, actin nucleation and elongation factor required for the assembly of F-actin structures, such as actin cables and stress fibers. Binds to the barbed end of the actin filament and slows down actin polymerization and depolymerization. Required for cytokinesis, and transcriptional activation of the serum response factor. DFR proteins couple Rho and Src tyrosine kinase during signaling and the regulation of actin dynamics. Functions as a scaffold protein for MAPRE1 and APC to stabilize microtubules and promote cell migration. Has neurite outgrowth promoting activity. Acts in a Rho-dependent manner to recruit PFY1 to the membrane. In hear cells, it may play a role in the regulation of actin polymerization in hair cells. The MEMO1-RHOA-DIAPH1 signaling pathway plays an important role in ERBB2-dependent stabilization of microtubules at the cell cortex. It controls the localization of APC and CLASP2 to the cell membrane, via the regulation of GSK3B activity. In turn, membrane-bound APC allows the localization of the MACF1 to the cell membrane, which is required for microtubule capture and stabilization. Plays a role in the regulation of cell morphology and cytoskeletal organization. Required in the control of cell shape. Plays a role in brain development. Also acts as an actin nucleation and elongation factor in the nucleus by promoting nuclear actin polymerization inside the nucleus to drive serum-dependent SRF-MRTFA activity. The polypeptide is Protein diaphanous homolog 1 (DIAPH1) (Homo sapiens (Human)).